We begin with the raw amino-acid sequence, 248 residues long: Pyridoxine 5'-phosphate synthase (248 aa).

Asn-12 is a binding site for 3-amino-2-oxopropyl phosphate. 14–15 contributes to the 1-deoxy-D-xylulose 5-phosphate binding site; that stretch reads DH. Residue Arg-23 coordinates 3-amino-2-oxopropyl phosphate. The active-site Proton acceptor is His-48. 1-deoxy-D-xylulose 5-phosphate contacts are provided by Arg-50 and His-55. The active-site Proton acceptor is Glu-75. Thr-105 contributes to the 1-deoxy-D-xylulose 5-phosphate binding site. The Proton donor role is filled by His-196. 3-amino-2-oxopropyl phosphate is bound by residues Gly-197 and 218–219; that span reads GH.

The protein belongs to the PNP synthase family. In terms of assembly, homooctamer; tetramer of dimers.

It is found in the cytoplasm. The enzyme catalyses 3-amino-2-oxopropyl phosphate + 1-deoxy-D-xylulose 5-phosphate = pyridoxine 5'-phosphate + phosphate + 2 H2O + H(+). It functions in the pathway cofactor biosynthesis; pyridoxine 5'-phosphate biosynthesis; pyridoxine 5'-phosphate from D-erythrose 4-phosphate: step 5/5. In terms of biological role, catalyzes the complicated ring closure reaction between the two acyclic compounds 1-deoxy-D-xylulose-5-phosphate (DXP) and 3-amino-2-oxopropyl phosphate (1-amino-acetone-3-phosphate or AAP) to form pyridoxine 5'-phosphate (PNP) and inorganic phosphate. This Stutzerimonas stutzeri (strain A1501) (Pseudomonas stutzeri) protein is Pyridoxine 5'-phosphate synthase.